A 652-amino-acid chain; its full sequence is Large subunit GTPase 1 homolog (652 aa).

Serine 93 is modified (phosphoserine). Positions 164–438 (WRQLWRVIER…LCDCPGLVMP (275 aa)) constitute a CP-type G domain. 212-215 (NKAD) serves as a coordination point for GTP. Position 252 is a phosphoserine (serine 252). Residues 288-347 (LGEAASSEEDESEYEDCQEEEEDWQTCLEDSSSSDEEACGQDCKEGHTVDSEAQGRNTPQ) form a disordered region. The span at 293-311 (SSEEDESEYEDCQEEEEDW) shows a compositional bias: acidic residues. GTP is bound by residues 387 to 394 (GYPNVGKS) and 431 to 434 (DCPG). A disordered region spans residues 625 to 652 (RGAGKPWKKHGNRNKKEKSRRLYKHLDM). The segment covering 630–652 (PWKKHGNRNKKEKSRRLYKHLDM) has biased composition (basic residues).

The protein belongs to the TRAFAC class YlqF/YawG GTPase family. LSG1 subfamily.

Its subcellular location is the cytoplasm. The protein resides in the endoplasmic reticulum. The protein localises to the nucleus. It localises to the cajal body. It carries out the reaction GTP + H2O = GDP + phosphate + H(+). Functions as a GTPase. May act by mediating the release of NMD3 from the 60S ribosomal subunit after export into the cytoplasm during the 60S ribosomal subunit maturation. The protein is Large subunit GTPase 1 homolog of Bos taurus (Bovine).